The primary structure comprises 638 residues: Acetolactate synthase 1, chloroplastic (638 aa).

Residues 1 to 19 (MATAAAASTALTGATTAAP) are compositionally biased toward low complexity. The disordered stretch occupies residues 1-23 (MATAAAASTALTGATTAAPKARR). A chloroplast-targeting transit peptide spans 1–39 (MATAAAASTALTGATTAAPKARRRAHLLATRRALAAPIR). Glutamate 112 contacts thiamine diphosphate. Cysteine 132 and cysteine 278 form a disulfide bridge. Residues arginine 214, 320 to 341 (HGTVYANYAVDKADLLLALGVR), and 363 to 382 (DIDPAEIGKNKQPHVSICAD) contribute to the FAD site. The thiamine pyrophosphate binding stretch occupies residues 455–535 (QHQMWAAQYY…VKVFVLNNQH (81 aa)). Mg(2+) contacts are provided by aspartate 506 and asparagine 533.

It belongs to the TPP enzyme family. It depends on Mg(2+) as a cofactor. Thiamine diphosphate is required as a cofactor.

The protein resides in the plastid. The protein localises to the chloroplast. The enzyme catalyses 2 pyruvate + H(+) = (2S)-2-acetolactate + CO2. The protein operates within amino-acid biosynthesis; L-isoleucine biosynthesis; L-isoleucine from 2-oxobutanoate: step 1/4. It participates in amino-acid biosynthesis; L-valine biosynthesis; L-valine from pyruvate: step 1/4. The sequence is that of Acetolactate synthase 1, chloroplastic (ALS1) from Zea mays (Maize).